A 141-amino-acid chain; its full sequence is Hemoglobin subunit alpha (141 aa).

One can recognise a Globin domain in the interval 1 to 141 (VLSEEDKSHV…VSAMLTSKYR (141 aa)). Histidine 58 contacts O2. Heme b is bound at residue histidine 87.

The protein belongs to the globin family. As to quaternary structure, heterotetramer of two alpha chains and two beta chains. As to expression, red blood cells.

Functionally, involved in oxygen transport from the lung to the various peripheral tissues. In Caiman crocodilus (Spectacled caiman), this protein is Hemoglobin subunit alpha (HBA).